The following is a 160-amino-acid chain: Cytochrome b6-f complex subunit 4 (160 aa).

Transmembrane regions (helical) follow at residues 36–56, 95–115, and 131–151; these read LLYV…GLAV, LLGV…PFIE, and LVFI…CLPI.

This sequence belongs to the cytochrome b family. PetD subfamily. The 4 large subunits of the cytochrome b6-f complex are cytochrome b6, subunit IV (17 kDa polypeptide, petD), cytochrome f and the Rieske protein, while the 4 small subunits are petG, petL, petM and petN. The complex functions as a dimer.

Its subcellular location is the plastid. It is found in the chloroplast thylakoid membrane. Its function is as follows. Component of the cytochrome b6-f complex, which mediates electron transfer between photosystem II (PSII) and photosystem I (PSI), cyclic electron flow around PSI, and state transitions. The protein is Cytochrome b6-f complex subunit 4 of Trieres chinensis (Marine centric diatom).